A 190-amino-acid chain; its full sequence is Potassium-transporting ATPase KdpC subunit (190 aa).

A helical membrane pass occupies residues 10-30 (TFIFLLLITGGVYPLLTTVLG).

The protein belongs to the KdpC family. The system is composed of three essential subunits: KdpA, KdpB and KdpC.

The protein localises to the cell inner membrane. Functionally, part of the high-affinity ATP-driven potassium transport (or Kdp) system, which catalyzes the hydrolysis of ATP coupled with the electrogenic transport of potassium into the cytoplasm. This subunit acts as a catalytic chaperone that increases the ATP-binding affinity of the ATP-hydrolyzing subunit KdpB by the formation of a transient KdpB/KdpC/ATP ternary complex. The chain is Potassium-transporting ATPase KdpC subunit from Escherichia coli (strain K12 / MC4100 / BW2952).